We begin with the raw amino-acid sequence, 271 residues long: Meiotic drive suppressor wtf35 (271 aa).

Disordered regions lie at residues M1–I24 and T54–Q75. Residues E57 to P69 are compositionally biased toward polar residues. Transmembrane regions (helical) follow at residues L90–P110, A120–F140, W176–P196, and S213–V233.

It belongs to the WTF family. As to quaternary structure, homomer. Interacts with other proteins that exhibit high sequence similarity.

Its subcellular location is the spore membrane. The protein localises to the vacuole membrane. Acts as a suppressor component of the dual wtf meiotic drive system, and can suppress but not confer meiotic drive by compatible poisons. Wtf meiotic drive systems promote unequal transmission of alleles from the parental zygote to progeny spores by encoding a poison and an antidote from the same locus; the poison is trans-acting and forms toxic aggregates in all spores within an ascus, wherease the antidote is spore-specific and targets aggregates for degradation by the vacuole. Meiotic drive by wtf systems therefore lead to poisoning of all progeny that do not inherit the dual poison/antidote allele, or express a compatible antidote. This is Meiotic drive suppressor wtf35 from Schizosaccharomyces kambucha (Fission yeast).